The chain runs to 201 residues: Large ribosomal subunit protein uL4 (201 aa).

The disordered stretch occupies residues 39 to 67 (ARQGSRAQKTRSEVAGGGRKPWKQKGSGR).

This sequence belongs to the universal ribosomal protein uL4 family. In terms of assembly, part of the 50S ribosomal subunit.

One of the primary rRNA binding proteins, this protein initially binds near the 5'-end of the 23S rRNA. It is important during the early stages of 50S assembly. It makes multiple contacts with different domains of the 23S rRNA in the assembled 50S subunit and ribosome. Functionally, forms part of the polypeptide exit tunnel. The polypeptide is Large ribosomal subunit protein uL4 (Marinomonas sp. (strain MWYL1)).